A 357-amino-acid polypeptide reads, in one-letter code: Guanine nucleotide-binding protein G(o) subunit alpha (357 aa).

The N-myristoyl glycine moiety is linked to residue G2. A lipid anchor (S-palmitoyl cysteine) is attached at C3. The G-alpha domain occupies K32–Y357. Residues K35–T48 are G1 motif. GTP-binding positions include G40–S47, L179–T185, D204–Q208, N273–D276, and A329. Mg(2+) contacts are provided by S47 and T185. Residues D177–T185 form a G2 motif region. The segment at F200 to R209 is G3 motif. The interval I269 to D276 is G4 motif. A G5 motif region spans residues T327–T332.

The protein belongs to the G-alpha family. G(i/o/t/z) subfamily. In terms of assembly, g proteins are composed of 3 units; alpha, beta and gamma. The alpha chain contains the guanine nucleotide binding site.

Functionally, guanine nucleotide-binding proteins (G proteins) are involved as modulators or transducers in various transmembrane signaling systems. The G(o) protein function is not clear. The protein is Guanine nucleotide-binding protein G(o) subunit alpha (SCGOA) of Mizuhopecten yessoensis (Japanese scallop).